A 1292-amino-acid chain; its full sequence is (E3-independent) E2 ubiquitin-conjugating enzyme (1292 aa).

The span at 1–37 shows a compositional bias: pro residues; it reads MADPAAPTPAAPAPAQAPAPAPEAVPAPAAAPVPAPA. Disordered regions lie at residues 1-56 and 85-114; these read MADP…EAGS and EDSD…EGRA. The segment covering 38–56 has biased composition (low complexity); the sequence is PASDSASGPSSDSGPEAGS. 5 positions are modified to phosphoserine: S50, S87, S89, S399, and S401. Disordered stretches follow at residues 401 to 459, 472 to 519, and 714 to 746; these read SPDT…AGEQ, RLHS…IPLS, and IEES…TDNG. Positions 406 to 427 are enriched in basic and acidic residues; that stretch reads CSRDHSMEDPDKKGESKTKSEA. At S441 the chain carries Phosphoserine. Acidic residues predominate over residues 478-490; the sequence is QDADDEAADDTDD. 2 positions are modified to phosphothreonine: T488 and T491. Positions 491–510 are enriched in low complexity; it reads TSSVTSSASSTTSSQSGSGT. The Nuclear localization signal signature appears at 512–536; it reads RKKSIPLSIKNLKRKHKRKKNKITR. S515 is subject to Phosphoserine. The segment covering 732 to 742 has biased composition (acidic residues); it reads DEWEDDSDSWE. Positions 812–882 form a coiled coil; sequence RELKEAIKIL…IVEEEKMEAV (71 aa). S836 is subject to Phosphoserine. Phosphothreonine is present on T838. S839 bears the Phosphoserine mark. Residues 882 to 893 are compositionally biased toward basic and acidic residues; the sequence is VPDVERKEDKPE. A disordered region spans residues 882–903; that stretch reads VPDVERKEDKPEGQSPVKAEWP. A Phosphoserine modification is found at S896. Positions 953–1113 constitute a UBC core domain; sequence KFFSTVRKEM…ALIRVVQSMT (161 aa). C1040 (glycyl thioester intermediate) is an active-site residue. Positions 1160–1248 are disordered; sequence NGVPKASSSP…KSYRSFLPEK (89 aa).

It belongs to the ubiquitin-conjugating enzyme family. As to quaternary structure, interacts with CPNE1 (via VWFA domain) and CPNE4 (via VWFA domain). Interacts with UBR2. In terms of processing, phosphorylated. Phosphorylation affects subcellular location. Post-translationally, ubiquitinated: autoubiquitinates, possibly affecting its subcellular location. Predominantly expressed in skeletal muscle and heart.

Its subcellular location is the cytoplasm. It is found in the nucleus. It catalyses the reaction S-ubiquitinyl-[E1 ubiquitin-activating enzyme]-L-cysteine + [acceptor protein]-L-lysine = [E1 ubiquitin-activating enzyme]-L-cysteine + N(6)-monoubiquitinyl-[acceptor protein]-L-lysine.. The protein operates within protein modification; protein ubiquitination. Inhibited by phenylarsine oxide (PAO). Functionally, E2/E3 hybrid ubiquitin-protein ligase that displays both E2 and E3 ligase activities and mediates monoubiquitination of target proteins. Negatively regulates TRAF6-mediated NF-kappa-B activation independently of its E2 activity. Acts as a positive regulator of BMP7 signaling by mediating monoubiquitination of SMAD6, thereby regulating adipogenesis. Mediates monoubiquitination at different sites of the nuclear localization signal (NLS) of BAP1, leading to cytoplasmic retention of BAP1. Also able to monoubiquitinate the NLS of other chromatin-associated proteins, such as INO80 and CXXC1, affecting their subcellular location. Acts as a regulator of retrograde transport by assisting the TRIM27:MAGEL2 E3 ubiquitin ligase complex to mediate 'Lys-63'-linked ubiquitination of WASHC1, leading to promote endosomal F-actin assembly. This is (E3-independent) E2 ubiquitin-conjugating enzyme (UBE2O) from Homo sapiens (Human).